We begin with the raw amino-acid sequence, 458 residues long: MSFDFIKDKNKHIHFIGIGGISMSGLAEILLYNNFSISGSDMNSSPITEKLKDKGAKIYIGHKKENVKDADLIVYTAAIASDNPEITKAKEKNIKLMDRADFLGNLMKGYKYNIAISGTHGKTTTTSMLSHVALKANVDPTILVGGNLDIINGNVRVGESDFFITEACEYKSSFLKFFPYIGVILNIDADHLDYYKDLDDIKNAFSKFIKLIPKDGYLVAYGEDKNIQSIIKEASCNVITYGINSGDIQAHNIEYDEKACGNFDVVKDNQKLFSVKLNVPGKHNILNSLASICIGLASNMKDKDIIEGIESFFGTHRRFELKGCKNNITVIDDYAHHPTEISATLDAAKKYPHNKLFCVFQPHTYSRTLTLFDDFTKCFDNADEIILADIYAAREKDTGIISSDMLGDKLRDRGLKCTNFHKFDDIKNYLIENTKDGDLILTVGAGDIYKVGEMYINL.

118-124 (GTHGKTT) contributes to the ATP binding site.

Belongs to the MurCDEF family.

It localises to the cytoplasm. It carries out the reaction UDP-N-acetyl-alpha-D-muramate + L-alanine + ATP = UDP-N-acetyl-alpha-D-muramoyl-L-alanine + ADP + phosphate + H(+). It functions in the pathway cell wall biogenesis; peptidoglycan biosynthesis. Functionally, cell wall formation. This is UDP-N-acetylmuramate--L-alanine ligase from Clostridium botulinum (strain ATCC 19397 / Type A).